A 73-amino-acid polypeptide reads, in one-letter code: Large ribosomal subunit protein bL28 (73 aa).

It belongs to the bacterial ribosomal protein bL28 family.

This chain is Large ribosomal subunit protein bL28, found in Anaeromyxobacter dehalogenans (strain 2CP-1 / ATCC BAA-258).